The chain runs to 116 residues: Large ribosomal subunit protein uL24 (116 aa).

The protein belongs to the universal ribosomal protein uL24 family. In terms of assembly, part of the 50S ribosomal subunit.

Its function is as follows. One of two assembly initiator proteins, it binds directly to the 5'-end of the 23S rRNA, where it nucleates assembly of the 50S subunit. In terms of biological role, located at the polypeptide exit tunnel on the outside of the subunit. This chain is Large ribosomal subunit protein uL24, found in Methanothrix thermoacetophila (strain DSM 6194 / JCM 14653 / NBRC 101360 / PT) (Methanosaeta thermophila).